We begin with the raw amino-acid sequence, 190 residues long: NADH-quinone oxidoreductase subunit C (190 aa).

It belongs to the complex I 30 kDa subunit family. NDH-1 is composed of 14 different subunits. Subunits NuoB, C, D, E, F, and G constitute the peripheral sector of the complex.

It localises to the cell membrane. The catalysed reaction is a quinone + NADH + 5 H(+)(in) = a quinol + NAD(+) + 4 H(+)(out). Its function is as follows. NDH-1 shuttles electrons from NADH, via FMN and iron-sulfur (Fe-S) centers, to quinones in the respiratory chain. The immediate electron acceptor for the enzyme in this species is believed to be ubiquinone. Couples the redox reaction to proton translocation (for every two electrons transferred, four hydrogen ions are translocated across the cytoplasmic membrane), and thus conserves the redox energy in a proton gradient. This chain is NADH-quinone oxidoreductase subunit C, found in Wolbachia sp. subsp. Brugia malayi (strain TRS).